A 580-amino-acid chain; its full sequence is Zinc finger CCCH domain-containing protein 47 (580 aa).

2 ANK repeats span residues 72–102 (EERTPLMVAAMYGSIKVLTFIVSTGKSDVNR) and 107–139 (ERVTPLHCAVAGCSVNMIEVINVLLDASALVNS). 2 C3H1-type zinc fingers span residues 251 to 278 (PYTCVPCPEFRKGSCPKGDSCEYAHGVF) and 286 to 310 (QYKTRLCKDETGCARKVCFFAHKRE). The tract at residues 421–451 (YVSSPSRNSQMGQNMNQHYPSSPVRQPPSQH) is disordered.

Expressed in roots and anthers.

Its subcellular location is the nucleus. Functionally, involved in salt stress response. May positively modulate plant tolerance to salt stress. This Arabidopsis thaliana (Mouse-ear cress) protein is Zinc finger CCCH domain-containing protein 47.